A 329-amino-acid chain; its full sequence is G-protein coupled receptor 3 (329 aa).

Topologically, residues 1 to 43 (MMWGAGRSMAWFSAGSGSVNVSIDPAEEPTGPATLLPSPRAWD) are extracellular. N-linked (GlcNAc...) asparagine glycosylation is present at Asn20. Residues 44-64 (VVLCISGTLVSCENALVVAII) form a helical membrane-spanning segment. Over 65–73 (VGTPAFRAP) the chain is Cytoplasmic. A helical transmembrane segment spans residues 74–94 (MFLLVGSLAVADLLAGLGLVL). The Extracellular portion of the chain corresponds to 95–108 (HFAADFCIGSPEMS). Residues 109–129 (LVLVGVLATAFTASIGSLLAI) form a helical membrane-spanning segment. Over 130-153 (TVDRYLSLYNALTYYSETTVTRTY) the chain is Cytoplasmic. The chain crosses the membrane as a helical span at residues 154 to 174 (VMLALVWVGALGLGLVPVLAW). The Extracellular segment spans residues 175 to 192 (NCRDGLTTCGVVYPLSKN). Residues 193–213 (HLVVLAIVFFMVFGIMLQLYA) form a helical membrane-spanning segment. The Cytoplasmic portion of the chain corresponds to 214–247 (QICRIVCRHAQQIALQRHLLPASHYVATRKGIAT). Residues 248-268 (LAVVLGAFAACWLPFTVYCLL) traverse the membrane as a helical segment. Over 269–277 (GDANSPPLY) the chain is Extracellular. A helical membrane pass occupies residues 278 to 298 (TYLTLLPATYNSMINPVIYAF). The Cytoplasmic segment spans residues 299–329 (RNQDVQKVLWAICCCCSTSKIPFRSRSPSDV). Cys312 carries the S-palmitoyl cysteine lipid modification. A phosphoserine mark is found at Ser323, Ser325, and Ser327.

Belongs to the G-protein coupled receptor 1 family. Abundantly expressed in granule neurons at all development stages. Enriched in the longest tips of neurites during differentiation of hippocampal neurons.

It is found in the cell membrane. In terms of biological role, constitutively active G-protein coupled receptor that maintains high 3'-5'-cyclic adenosine monophosphate (cAMP) levels that a plays a role in serveral processes including meiotic arrest in oocytes or neuronal development via activation of numerous intracellular signaling pathways. Acts as an essential activator of thermogenic adipocytes and drives thermogenesis via its intrinsic G(s)-coupling activity without the requirement of a ligand. Has a potential role in modulating a number of brain functions, including behavioral responses to stress, amyloid-beta peptide generation in neurons. Stimulates neurite outgrowth in cerebellar granular neurons modulated via PKA, ERK, and most strongly PI3K-mediated signaling pathways. The chain is G-protein coupled receptor 3 (Gpr3) from Rattus norvegicus (Rat).